The following is a 183-amino-acid chain: Small ribosomal subunit protein bS20c (183 aa).

A chloroplast-targeting transit peptide spans 1 to 68 (MAAISMACVS…FQRRGFSVVC (68 aa)). Positions 79–99 (AAKRTRQAETRRLRNKARKSE) are disordered.

Component of the chloroplast small ribosomal subunit (SSU). Mature 70S chloroplast ribosomes of higher plants consist of a small (30S) and a large (50S) subunit. The 30S small subunit contains 1 molecule of ribosomal RNA (16S rRNA) and 24 different proteins. The 50S large subunit contains 3 rRNA molecules (23S, 5S and 4.5S rRNA) and 33 different proteins.

It localises to the plastid. The protein resides in the chloroplast. Functionally, component of the chloroplast ribosome (chloro-ribosome), a dedicated translation machinery responsible for the synthesis of chloroplast genome-encoded proteins, including proteins of the transcription and translation machinery and components of the photosynthetic apparatus. This is Small ribosomal subunit protein bS20c (RPS20) from Spinacia oleracea (Spinach).